We begin with the raw amino-acid sequence, 324 residues long: Acetyl-coenzyme A carboxylase carboxyl transferase subunit alpha (324 aa).

Residues 37–291 (KLERRLDKLK…RDFILREWLR (255 aa)) enclose the CoA carboxyltransferase C-terminal domain.

The protein belongs to the AccA family. As to quaternary structure, acetyl-CoA carboxylase is a heterohexamer composed of biotin carboxyl carrier protein (AccB), biotin carboxylase (AccC) and two subunits each of ACCase subunit alpha (AccA) and ACCase subunit beta (AccD).

The protein localises to the cytoplasm. It catalyses the reaction N(6)-carboxybiotinyl-L-lysyl-[protein] + acetyl-CoA = N(6)-biotinyl-L-lysyl-[protein] + malonyl-CoA. It participates in lipid metabolism; malonyl-CoA biosynthesis; malonyl-CoA from acetyl-CoA: step 1/1. Component of the acetyl coenzyme A carboxylase (ACC) complex. First, biotin carboxylase catalyzes the carboxylation of biotin on its carrier protein (BCCP) and then the CO(2) group is transferred by the carboxyltransferase to acetyl-CoA to form malonyl-CoA. This Chlamydia abortus (strain DSM 27085 / S26/3) (Chlamydophila abortus) protein is Acetyl-coenzyme A carboxylase carboxyl transferase subunit alpha.